The following is a 424-amino-acid chain: Phosphoprotein associated with glycosphingolipid-enriched microdomains 1 (424 aa).

Residues 1-17 (MGPAGSALSSGQMQMQM) lie on the Extracellular side of the membrane. The chain crosses the membrane as a helical; Signal-anchor for type III membrane protein span at residues 18 to 38 (VLWGSLAAVAMFFLITFLILL). Residues cysteine 39 and cysteine 42 are each lipidated (S-palmitoyl cysteine). At 39 to 424 (CSSCDRDKKP…LQQGRDVTRL (386 aa)) the chain is on the cytoplasmic side. Phosphoserine occurs at positions 52 and 63. Phosphotyrosine; by LYN is present on tyrosine 107. Serine 157 is subject to Phosphoserine. A phosphotyrosine mark is found at tyrosine 165, tyrosine 183, and tyrosine 224. Residues 194–347 (DKSQGGKSKS…GPPQRSSSSC (154 aa)) are disordered. Residues 215–230 (AEGKADFAEYASVDRN) are compositionally biased toward basic and acidic residues. Serine 226 is modified (phosphoserine). Over residues 236-247 (STNAESILGTSS) the composition is skewed to polar residues. Tyrosine 314 carries the phosphotyrosine; by FYN and LYN modification. Residues 314 to 317 (YSSV) are interaction with CSK. Residues 331-347 (STCQCPQGPPQRSSSSC) show a composition bias toward polar residues. Position 346 is a phosphoserine (serine 346). A phosphotyrosine mark is found at tyrosine 351, tyrosine 381, and tyrosine 409. The segment at 361–424 (PNSISMLPPA…LQQGRDVTRL (64 aa)) is disordered. The interval 422–424 (TRL) is interaction with NHERF1.

In terms of assembly, interacts with NHERF1/EBP50. In resting T-cells, part of a PAG1-NHERF1-MSN complex which is disrupted upon TCR activation. When phosphorylated, interacts with CSK. Identified in a complex with LYN and STAT3. Interacts with LYN. Post-translationally, palmitoylated. Phosphorylated by FYN on Tyr-314 in resting T-cells; which promotes interaction with CSK. Dephosphorylated by PTPRC/CD45 upon TCR activation; which leads to CSK dissociation. May also be dephosphorylated by PTPN11. Hyperphosphorylated in mast cells upon FCER1 activation. Phosphorylated by LYN in response to EPO. As to expression, ubiquitously expressed, with highest levels in developing brain, lung, thymus, spleen and testis. Present in mast cells.

It localises to the cell membrane. In terms of biological role, negatively regulates TCR (T-cell antigen receptor)-mediated signaling in T-cells and FCER1 (high affinity immunoglobulin epsilon receptor)-mediated signaling in mast cells. Promotes CSK activation and recruitment to lipid rafts, which results in LCK inhibition. Inhibits immunological synapse formation by preventing dynamic arrangement of lipid raft proteins. May be involved in cell adhesion signaling. In Rattus norvegicus (Rat), this protein is Phosphoprotein associated with glycosphingolipid-enriched microdomains 1 (Pag1).